The sequence spans 352 residues: Chorismate synthase (352 aa).

An NADP(+)-binding site is contributed by arginine 48. Residues 125-127, 237-238, glycine 278, 293-297, and arginine 319 contribute to the FMN site; these read RSS, NA, and KPTSS.

The protein belongs to the chorismate synthase family. Homotetramer. Requires FMNH2 as cofactor.

The catalysed reaction is 5-O-(1-carboxyvinyl)-3-phosphoshikimate = chorismate + phosphate. The protein operates within metabolic intermediate biosynthesis; chorismate biosynthesis; chorismate from D-erythrose 4-phosphate and phosphoenolpyruvate: step 7/7. Its function is as follows. Catalyzes the anti-1,4-elimination of the C-3 phosphate and the C-6 proR hydrogen from 5-enolpyruvylshikimate-3-phosphate (EPSP) to yield chorismate, which is the branch point compound that serves as the starting substrate for the three terminal pathways of aromatic amino acid biosynthesis. This reaction introduces a second double bond into the aromatic ring system. The polypeptide is Chorismate synthase (Francisella tularensis subsp. holarctica (strain FTNF002-00 / FTA)).